The primary structure comprises 178 residues: Methylmalonyl-CoA epimerase, mitochondrial (178 aa).

A mitochondrion-targeting transit peptide spans 1–38; that stretch reads MRRVVKAAALAAGATGLFSRVQTSVAIGRSFSTPQSQF. The VOC domain maps to 49–178; that stretch reads RLNHVAVAVP…GGVLVELEQA (130 aa). Position 52 (His52) interacts with Co(2+). Position 116 is an N6-succinyllysine (Lys116). His124 lines the Co(2+) pocket. N6-acetyllysine; alternate is present on Lys152. Lys152 is modified (N6-succinyllysine; alternate). Co(2+) is bound at residue Glu174.

Belongs to the methylmalonyl-CoA epimerase family.

It is found in the mitochondrion. The catalysed reaction is (R)-methylmalonyl-CoA = (S)-methylmalonyl-CoA. Its function is as follows. Methylmalonyl-CoA epimerase involved in propionyl-CoA metabolism. This chain is Methylmalonyl-CoA epimerase, mitochondrial, found in Mus musculus (Mouse).